A 192-amino-acid chain; its full sequence is Ribosome maturation factor RimM (192 aa).

Residues 116–192 (PGEYYWVDLI…RIIVDWQPDY (77 aa)) enclose the PRC barrel domain.

This sequence belongs to the RimM family. Binds ribosomal protein uS19.

The protein resides in the cytoplasm. Functionally, an accessory protein needed during the final step in the assembly of 30S ribosomal subunit, possibly for assembly of the head region. Essential for efficient processing of 16S rRNA. May be needed both before and after RbfA during the maturation of 16S rRNA. It has affinity for free ribosomal 30S subunits but not for 70S ribosomes. The protein is Ribosome maturation factor RimM of Verminephrobacter eiseniae (strain EF01-2).